A 298-amino-acid chain; its full sequence is MQLEKMITEGSNAASAEIDRVSTLEMCRIINDEDKTVPLAVERVLPDIAAAIDVIHAQVSGGGRLIYLGAGTSGRLGILDASECPPTYGVKPGLVVGLIAGGEYAIQHAVEGAEDSREGGVNDLKNIGLTAQDVVVGIAASGRTPYVIAGLEYAHQLGCRTVGISCNPGSAVSTTAEFAITPVVGAEVVTGSSRMKAGTAQKLVLNMLSTGLMIKSGKVFGNLMVDVVATNEKLHVRQVNIVKNATGCSAEQAETALIACKRNCKTAIVMVLKNLDADEAKKCLDQHGGFIRKALEKE.

In terms of domain architecture, SIS spans I55–K218. E83 functions as the Proton donor in the catalytic mechanism. E114 is an active-site residue.

It belongs to the GCKR-like family. MurNAc-6-P etherase subfamily. Homodimer.

The catalysed reaction is N-acetyl-D-muramate 6-phosphate + H2O = N-acetyl-D-glucosamine 6-phosphate + (R)-lactate. It functions in the pathway amino-sugar metabolism; 1,6-anhydro-N-acetylmuramate degradation. The protein operates within amino-sugar metabolism; N-acetylmuramate degradation. Its pathway is cell wall biogenesis; peptidoglycan recycling. In terms of biological role, specifically catalyzes the cleavage of the D-lactyl ether substituent of MurNAc 6-phosphate, producing GlcNAc 6-phosphate and D-lactate. Together with AnmK, is also required for the utilization of anhydro-N-acetylmuramic acid (anhMurNAc) either imported from the medium or derived from its own cell wall murein, and thus plays a role in cell wall recycling. The sequence is that of N-acetylmuramic acid 6-phosphate etherase from Escherichia coli (strain SMS-3-5 / SECEC).